We begin with the raw amino-acid sequence, 157 residues long: NudC domain-containing protein 2 (157 aa).

N-acetylserine is present on Ser-2. The 91-residue stretch at 14 to 104 (CGTPWGQWYQ…DAANCWTSLL (91 aa)) folds into the CS domain. The disordered stretch occupies residues 134–157 (FDFSGAEISGNYTKGGPDFSNLEK). The residue at position 142 (Ser-142) is a Phosphoserine. Phosphotyrosine is present on Tyr-145.

In terms of assembly, interacts with LIS1.

Its subcellular location is the chromosome. It is found in the centromere. The protein resides in the kinetochore. The protein localises to the cytoplasm. It localises to the cytoskeleton. Its subcellular location is the microtubule organizing center. It is found in the centrosome. The protein resides in the spindle pole. Functionally, may regulate the LIS1/dynein pathway by stabilizing LIS1 with Hsp90 chaperone. This is NudC domain-containing protein 2 (Nudcd2) from Mus musculus (Mouse).